Consider the following 179-residue polypeptide: Crossover junction endodeoxyribonuclease RuvC (179 aa).

Residues D12, E72, and D144 contribute to the active site. Residues D12, E72, and D144 each contribute to the Mg(2+) site.

The protein belongs to the RuvC family. As to quaternary structure, homodimer which binds Holliday junction (HJ) DNA. The HJ becomes 2-fold symmetrical on binding to RuvC with unstacked arms; it has a different conformation from HJ DNA in complex with RuvA. In the full resolvosome a probable DNA-RuvA(4)-RuvB(12)-RuvC(2) complex forms which resolves the HJ. It depends on Mg(2+) as a cofactor.

It localises to the cytoplasm. The enzyme catalyses Endonucleolytic cleavage at a junction such as a reciprocal single-stranded crossover between two homologous DNA duplexes (Holliday junction).. Functionally, the RuvA-RuvB-RuvC complex processes Holliday junction (HJ) DNA during genetic recombination and DNA repair. Endonuclease that resolves HJ intermediates. Cleaves cruciform DNA by making single-stranded nicks across the HJ at symmetrical positions within the homologous arms, yielding a 5'-phosphate and a 3'-hydroxyl group; requires a central core of homology in the junction. The consensus cleavage sequence is 5'-(A/T)TT(C/G)-3'. Cleavage occurs on the 3'-side of the TT dinucleotide at the point of strand exchange. HJ branch migration catalyzed by RuvA-RuvB allows RuvC to scan DNA until it finds its consensus sequence, where it cleaves and resolves the cruciform DNA. This Dechloromonas aromatica (strain RCB) protein is Crossover junction endodeoxyribonuclease RuvC.